The following is a 260-amino-acid chain: Ribosomal RNA small subunit methyltransferase G (260 aa).

Positions 111, 116, and 181 each coordinate S-adenosyl-L-methionine.

Belongs to the methyltransferase superfamily. RNA methyltransferase RsmG family.

It localises to the cytoplasm. The catalysed reaction is guanosine(527) in 16S rRNA + S-adenosyl-L-methionine = N(7)-methylguanosine(527) in 16S rRNA + S-adenosyl-L-homocysteine. Functionally, specifically methylates the N7 position of guanine in position 527 of 16S rRNA. This is Ribosomal RNA small subunit methyltransferase G from Nitrobacter hamburgensis (strain DSM 10229 / NCIMB 13809 / X14).